A 196-amino-acid polypeptide reads, in one-letter code: HTH-type transcriptional regulator Hpr (196 aa).

Residues 13–157 form the HTH marR-type domain; that stretch reads SIVFSHKMAL…LICIVRHIYG (145 aa). Positions 63-86 form a DNA-binding region, H-T-H motif; the sequence is ISDIASHGVMHVSTAFNFSKKLEA.

In terms of assembly, homodimer.

In terms of biological role, negative regulator of protease production and sporulation. The polypeptide is HTH-type transcriptional regulator Hpr (Shouchella clausii (strain KSM-K16) (Alkalihalobacillus clausii)).